A 1681-amino-acid polypeptide reads, in one-letter code: Sodium channel protein type 7 subunit alpha (1681 aa).

The Cytoplasmic portion of the chain corresponds to 1–118 (MLTSPEPKGL…RRAAIKALVH (118 aa)). One copy of the I repeat lies at 101-402 (TLSPLNSLRR…ILTMTYEKEK (302 aa)). The helical transmembrane segment at 119–138 (PLFRLLILISVLTDSILMCM) threads the bilayer. Over 139 to 142 (SNLP) the chain is Extracellular. Residues 143 to 168 (EWILAIENTLLGIYAFEILVKVIARG) traverse the membrane as a helical segment. The Cytoplasmic portion of the chain corresponds to 169-179 (IWAGSFSFLGD). The helical transmembrane segment at 180–197 (LWNWLDFSVTLFELITRF) threads the bilayer. The Extracellular portion of the chain corresponds to 198–201 (SPLS). Residues 202 to 220 (SFLMLKTIRTFRILKIIPL) traverse the membrane as a helical segment. Over 221-238 (NHGLQSIVMTLAQCLKKL) the chain is Cytoplasmic. A helical transmembrane segment spans residues 239 to 260 (FGAIALALFFLAVFSLLGMGLF). Residues 261 to 339 (MGNLKHKCLR…PDNGFTSFDN (79 aa)) are Extracellular-facing. Cysteines 268 and 308 form a disulfide. Asparagine 277, asparagine 282, asparagine 288, and asparagine 310 each carry an N-linked (GlcNAc...) asparagine glycan. Residues 340-367 (FGWSLLAMFRLMTQDYPELLYHQILYAS) constitute an intramembrane region (pore-forming). Glycine 368 is a topological domain (extracellular). Residues 369–408 (KVYMIFFVMISFWFAFYLTSLFLGILTMTYEKEKQRACEE) form a helical membrane-spanning segment. The Cytoplasmic segment spans residues 409–506 (SGGLDPKCQQ…EFADRVITHP (98 aa)). The II repeat unit spans residues 488-757 (CSPCWVKLNE…QLAMARIKSG (270 aa)). A helical membrane pass occupies residues 507–522 (LADLFLVICIVLNICF). The Extracellular segment spans residues 523–531 (LALEHFPMS). A helical membrane pass occupies residues 532–560 (EELRSLLHVGNLVFIGIYTIEMILKIIAM). Residues 561 to 569 (HPYGYFQIS) lie on the Cytoplasmic side of the membrane. Residues 570 to 587 (WNIFDSILVVLELTEILL) traverse the membrane as a helical segment. The Extracellular portion of the chain corresponds to 588 to 593 (ADVEGL). A helical transmembrane segment spans residues 594-609 (AVLITVPLIFIKLGKY). At 610-626 (GPPFKSLMRILGSSLMA) the chain is on the cytoplasmic side. The chain crosses the membrane as a helical span at residues 627 to 655 (LKDLVLLLCIFVYFSAVFGMKLFGRSYKD). The Extracellular portion of the chain corresponds to 656–673 (CVCHIKEDCQPQRWHMSD). 2 cysteine pairs are disulfide-bonded: cysteine 658–cysteine 664 and cysteine 696–cysteine 705. The pore-forming intramembrane region spans 674–700 (FLHAYMTVFRILCGEWIETLWECMEVA). Residue glycine 701 is a topological domain, extracellular. A helical membrane pass occupies residues 702–732 (QAWCIPFYMMVILIGNLLILYLFVTLVSSFS). Over 733–934 (YYDATSEVNK…KTCCKIVENS (202 aa)) the chain is Cytoplasmic. Residues 806-834 (YKDQSSSTEKTPVTESESQSLIASPSASE) show a composition bias toward polar residues. Residues 806-875 (YKDQSSSTEK…MKQSSSSECS (70 aa)) are disordered. Serine 843 carries the post-translational modification Phosphoserine. The stretch at 916 to 1224 (NGKIWKNIRK…KKQYRALKKL (309 aa)) is one III repeat. The helical transmembrane segment at 935-953 (WFECFIGLVTLLCTGTLAL) threads the bilayer. At 954 to 961 (EDIYIDQR) the chain is on the extracellular side. Residues 962–990 (KTTKILLEYADMIFAYIFILEMLLKWVAY) form a helical membrane-spanning segment. Residues 991 to 998 (GFKAFFSN) are Cytoplasmic-facing. Residues 999–1020 (NWYKLDFMVVIVFCLSLIGKTR) form a helical membrane-spanning segment. A topological domain (extracellular) is located at residue glutamate 1021. A helical membrane pass occupies residues 1022 to 1040 (DLNPLTSIKFLRALRVLSQ). Topologically, residues 1041 to 1055 (FERMKVVLRALIKTT) are cytoplasmic. A helical membrane pass occupies residues 1056-1080 (LPTVSVFLVCLMIWLLFSVIGVQLF). Topologically, residues 1081–1127 (AGKFYECIDPTKGERFPVFEVMNKSQCEKLLFNESMPWENAKLNFDN) are extracellular. Cysteines 1087 and 1107 form a disulfide. 2 N-linked (GlcNAc...) asparagine glycosylation sites follow: asparagine 1103 and asparagine 1113. Positions 1128–1154 (VGNGFLSLLQVATFNGWISIMNSAIDS) form an intramembrane region, pore-forming. Residues 1155–1167 (VGVNMQPSFEYNL) lie on the Extracellular side of the membrane. Residues 1168-1202 (YMYSYFIIFVIFGLFLPLCMLIGVIIRNFNKQKIK) form a helical membrane-spanning segment. Topologically, residues 1203 to 1250 (QGGSNIFITVKQKKQYRALKKLLYADVQKPTPRPRNKFQGFLFDLVTH) are cytoplasmic. One copy of the IV repeat lies at 1233 to 1531 (TPRPRNKFQG…WNRFDPDRTQ (299 aa)). The chain crosses the membrane as a helical span at residues 1251 to 1272 (RVFNVIIILLICFQATTIMIQK). Over 1273 to 1276 (DEQS) the chain is Extracellular. Residues 1277 to 1305 (PQMETAIFWMNSIFVMLFTLECILKLTAF) form a helical membrane-spanning segment. At 1306 to 1312 (RCHYFTS) the chain is on the cytoplasmic side. Residues 1313–1338 (AWNVHDFMVVIFSITGLLLPLTIGQY) traverse the membrane as a helical segment. The Extracellular portion of the chain corresponds to 1339–1341 (FVP). The helical transmembrane segment at 1342-1362 (PSLVQLILLSRVIHILRPGKG) threads the bilayer. Over 1363–1377 (PKVFHDLMLPLILAL) the chain is Cytoplasmic. Residues 1378-1402 (PALLNISLLIFLVMFIYAIFGMYNF) form a helical membrane-spanning segment. The Extracellular portion of the chain corresponds to 1403 to 1420 (AYVKKEAGINDVSNFETF). The pore-forming intramembrane region spans 1421 to 1444 (GSSMLCLFQVTTFSGWDGMLDAIF). Residues 1445 to 1468 (NSQWSDCDPDKINPGTQVKGDCGS) are Extracellular-facing. An intrachain disulfide couples cysteine 1451 to cysteine 1466. A helical membrane pass occupies residues 1469–1504 (PSVGISYFVSYILISWLIIVNMYIVLIMEFLSIPSQ). Residues 1505–1681 (KKSRTLSEDD…EEKASIQTQI (177 aa)) are Cytoplasmic-facing. A compositionally biased stretch (basic and acidic residues) spans 1647-1662 (NVSDTPAIDDRRDDLT). Positions 1647–1681 (NVSDTPAIDDRRDDLTSKGAHSGKIEEKASIQTQI) are disordered.

This sequence belongs to the sodium channel (TC 1.A.1.10) family. SCN7A subfamily. As to quaternary structure, the sodium channel formed by SCN7A is probably a heterooligomeric complex consisting of the ion conducting pore forming alpha subunit SCN7A and regulatory beta subunits such as SCN3B. Interacts with ATP1A1; activates ATP1A1 and thereby indirectly signals to nearby neurons to regulate sodium homeostasis. Not tissue specific but widely expressed. Expressed in regions of the central nervous system that control body fluid ionic balance.

The protein resides in the cell membrane. The catalysed reaction is Na(+)(in) = Na(+)(out). Sodium leak channel functioning as an osmosensor regulating sodium ion levels in various tissues and organs. While most sodium channels are voltage-gated, SCN7A is not and lets sodium flow through membrane along its concentration gradient. In glial cells of the central nervous system, senses body-fluid sodium levels and controls salt intake behavior as well as voluntary water intake through activation of nearby neurons to maintain appropriate sodium levels in the body. By mediating sodium influx into keratinocytes, also plays a role in skin barrier homeostasis. This is Sodium channel protein type 7 subunit alpha from Mus musculus (Mouse).